We begin with the raw amino-acid sequence, 227 residues long: Cytochrome c oxidase subunit 2 (227 aa).

The Mitochondrial intermembrane portion of the chain corresponds to 1 to 14 (MAYPFQLGLQDATS). A helical membrane pass occupies residues 15–45 (PIMEELLHFHDHTLMIVFLISSLVLYIISLM). Topologically, residues 46 to 59 (LTTKLTHTSTMDAQ) are mitochondrial matrix. Residues 60–87 (EVETVWTILPAIILILIALPSLRILYMM) traverse the membrane as a helical segment. Residues 88 to 227 (DEINNPSLTV…YFETWSALMV (140 aa)) are Mitochondrial intermembrane-facing. Cu cation contacts are provided by H161, C196, E198, C200, H204, and M207. Residue E198 participates in Mg(2+) binding. The residue at position 218 (Y218) is a Phosphotyrosine.

The protein belongs to the cytochrome c oxidase subunit 2 family. In terms of assembly, component of the cytochrome c oxidase (complex IV, CIV), a multisubunit enzyme composed of 14 subunits. The complex is composed of a catalytic core of 3 subunits MT-CO1, MT-CO2 and MT-CO3, encoded in the mitochondrial DNA, and 11 supernumerary subunits COX4I, COX5A, COX5B, COX6A, COX6B, COX6C, COX7A, COX7B, COX7C, COX8 and NDUFA4, which are encoded in the nuclear genome. The complex exists as a monomer or a dimer and forms supercomplexes (SCs) in the inner mitochondrial membrane with NADH-ubiquinone oxidoreductase (complex I, CI) and ubiquinol-cytochrome c oxidoreductase (cytochrome b-c1 complex, complex III, CIII), resulting in different assemblies (supercomplex SCI(1)III(2)IV(1) and megacomplex MCI(2)III(2)IV(2)). Found in a complex with TMEM177, COA6, COX18, COX20, SCO1 and SCO2. Interacts with TMEM177 in a COX20-dependent manner. Interacts with COX20. Interacts with COX16. Requires Cu cation as cofactor.

It is found in the mitochondrion inner membrane. The enzyme catalyses 4 Fe(II)-[cytochrome c] + O2 + 8 H(+)(in) = 4 Fe(III)-[cytochrome c] + 2 H2O + 4 H(+)(out). Its function is as follows. Component of the cytochrome c oxidase, the last enzyme in the mitochondrial electron transport chain which drives oxidative phosphorylation. The respiratory chain contains 3 multisubunit complexes succinate dehydrogenase (complex II, CII), ubiquinol-cytochrome c oxidoreductase (cytochrome b-c1 complex, complex III, CIII) and cytochrome c oxidase (complex IV, CIV), that cooperate to transfer electrons derived from NADH and succinate to molecular oxygen, creating an electrochemical gradient over the inner membrane that drives transmembrane transport and the ATP synthase. Cytochrome c oxidase is the component of the respiratory chain that catalyzes the reduction of oxygen to water. Electrons originating from reduced cytochrome c in the intermembrane space (IMS) are transferred via the dinuclear copper A center (CU(A)) of subunit 2 and heme A of subunit 1 to the active site in subunit 1, a binuclear center (BNC) formed by heme A3 and copper B (CU(B)). The BNC reduces molecular oxygen to 2 water molecules using 4 electrons from cytochrome c in the IMS and 4 protons from the mitochondrial matrix. The polypeptide is Cytochrome c oxidase subunit 2 (MT-CO2) (Urocyon cinereoargenteus (Gray fox)).